The primary structure comprises 34 residues: Photosystem II reaction center protein M (34 aa).

Residues Ile5–Ile25 form a helical membrane-spanning segment.

It belongs to the PsbM family. PSII is composed of 1 copy each of membrane proteins PsbA, PsbB, PsbC, PsbD, PsbE, PsbF, PsbH, PsbI, PsbJ, PsbK, PsbL, PsbM, PsbT, PsbX, PsbY, PsbZ, Psb30/Ycf12, at least 3 peripheral proteins of the oxygen-evolving complex and a large number of cofactors. It forms dimeric complexes.

The protein resides in the plastid. It is found in the chloroplast thylakoid membrane. Functionally, one of the components of the core complex of photosystem II (PSII). PSII is a light-driven water:plastoquinone oxidoreductase that uses light energy to abstract electrons from H(2)O, generating O(2) and a proton gradient subsequently used for ATP formation. It consists of a core antenna complex that captures photons, and an electron transfer chain that converts photonic excitation into a charge separation. This subunit is found at the monomer-monomer interface. This is Photosystem II reaction center protein M from Piper cenocladum (Ant piper).